A 1222-amino-acid polypeptide reads, in one-letter code: Serine/threonine-protein kinase WNK4 (1222 aa).

Polar residues predominate over residues 1-17 (MLAPRNTETGVPMSQTE). A disordered region spans residues 1–165 (MLAPRNTETG…DTETQAVATS (165 aa)). The segment covering 90 to 101 (AGPTRSPPSSSK) has biased composition (low complexity). Phosphoserine is present on serine 95. Residues 135–152 (EPPRVPDAAARERRREQE) show a composition bias toward basic and acidic residues. Glycyl lysine isopeptide (Lys-Gly) (interchain with G-Cter in ubiquitin) cross-links involve residues lysine 154 and lysine 172. Residues 171-429 (LKFDIEIGRG…IQDLLAHAFF (259 aa)) enclose the Protein kinase domain. Serine 181 is an ATP binding site. Residues lysine 183, lysine 223, and lysine 238 each participate in a glycyl lysine isopeptide (Lys-Gly) (interchain with G-Cter in ubiquitin) cross-link. Residues 251-254 (TELM) and lysine 301 contribute to the ATP site. Aspartate 318 acts as the Proton acceptor in catalysis. Lysine 325 is covalently cross-linked (Glycyl lysine isopeptide (Lys-Gly) (interchain with G-Cter in ubiquitin)). A phosphoserine; by autocatalysis mark is found at serine 328 and serine 332. Glycyl lysine isopeptide (Lys-Gly) (interchain with G-Cter in ubiquitin) cross-links involve residues lysine 384, lysine 390, lysine 447, and lysine 451. The interval 525-562 (RELEVLPPDSGPPPATVSLAPGPPSAFPPEPEEPEADQ) is disordered. The segment covering 533-553 (DSGPPPATVSLAPGPPSAFPP) has biased composition (pro residues). The interaction with KLHL3 stretch occupies residues 554–564 (EPEEPEADQHQ). Serine 572 is subject to Phosphoserine. Disordered stretches follow at residues 626-659 (RSGP…MRKN), 747-809 (DAGP…GAPF), 877-896 (SYPQ…SPPS), and 927-976 (SPGL…AQPL). Composition is skewed to low complexity over residues 627 to 638 (SGPGSDFSPGDS), 757 to 769 (ALSP…ALPA), 793 to 807 (STSP…SPGA), and 877 to 890 (SYPQ…SLPV). Residues 935 to 944 (PPAPPGPLPS) show a composition bias toward pro residues. Residues 953-963 (DQESLSAQTAE) show a composition bias toward polar residues. Residue lysine 990 forms a Glycyl lysine isopeptide (Lys-Gly) (interchain with G-Cter in ubiquitin) linkage. The short motif at 996–999 (RFQV) is the RFXV motif element. Residues 1000-1087 (TSSKEPAEPP…SSPILSHPSP (88 aa)) are disordered. Serine 1014 bears the Phosphoserine mark. Positions 1014–1032 (SPTLSRSLKLPSPPLTSES) are enriched in low complexity. Basic and acidic residues predominate over residues 1044–1056 (ETREALAESDRAA). Glycyl lysine isopeptide (Lys-Gly) (interchain with G-Cter in ubiquitin) cross-links involve residues lysine 1123, lysine 1136, and lysine 1137. Residues 1166 to 1222 (RRLSKGSFPTSRRNSLQRSDLPGPGIMRRNSLSGSSTGSQEQRASKGVTFAGDIGRM) form a disordered region. Polar residues-rich tracts occupy residues 1172-1183 (SFPTSRRNSLQR) and 1195-1207 (NSLS…SQEQ). Serine 1196 carries the post-translational modification Phosphoserine.

This sequence belongs to the protein kinase superfamily. Ser/Thr protein kinase family. WNK subfamily. Interacts with the C-terminal region of KCNJ1. Interacts with WNK1 and WNK3. Interacts with KLHL3. The cofactor is Mg(2+). Post-translationally, autophosphorylated at Ser-328 and Ser-332, promoting its activation. Phosphorylated by WNK1 and WNK3. Phosphorylated at Ser-572 in a MAP3K15/ASK3-dependent process in response to osmotic stress or hypotonic low-chloride stimulation. Ubiquitinated by the BCR(KLHL3) complex, leading to its degradation. Also ubiquitinated by the BCR(KLHL2) complex. Locates to the distal convoluted tubule, the medullary collecting duct and the cortical collecting duct of the kidney. Expressed in pancreatic duct.

Its subcellular location is the cell junction. It is found in the tight junction. The enzyme catalyses L-seryl-[protein] + ATP = O-phospho-L-seryl-[protein] + ADP + H(+). It catalyses the reaction L-threonyl-[protein] + ATP = O-phospho-L-threonyl-[protein] + ADP + H(+). Activation requires autophosphorylation of Ser-328 and Ser-332. Autophosphorylation and subsequent activation is inhibited by increases in intracellular ionic strength: Cl(-) potently inhibits WNK4 kinase activity via direct binding. Also inhibited by K(+) ions. Its function is as follows. Serine/threonine-protein kinase component of the WNK4-SPAK/OSR1 kinase cascade, which acts as a key regulator of ion transport in the distal nephron and blood pressure. The WNK4-SPAK/OSR1 kinase cascade is composed of WNK4, which mediates phosphorylation and activation of downstream kinases OXSR1/OSR1 and STK39/SPAK. Following activation, OXSR1/OSR1 and STK39/SPAK catalyze phosphorylation of ion cotransporters, such as SLC12A1/NKCC2, SLC12A2/NKCC1, SLC12A3/NCC, SLC12A5/KCC2 or SLC12A6/KCC3, regulating their activity. Acts as a molecular switch that regulates the balance between renal salt reabsorption and K(+) secretion by modulating the activities of renal transporters and channels, including the Na-Cl cotransporter SLC12A3/NCC and the K(+) channel, KCNJ1/ROMK. Regulates NaCl reabsorption in the distal nephron by activating the thiazide-sensitive Na-Cl cotransporter SLC12A3/NCC in distal convoluted tubule cells of kidney: activates SLC12A3/NCC in a OXSR1/OSR1- and STK39/SPAK-dependent process. Also acts as a scaffold protein independently of its protein kinase activity: negatively regulates cell membrane localization of various transporters and channels (CFTR, KCNJ1/ROMK, SLC4A4, SLC26A9 and TRPV4) by clathrin-dependent endocytosis. Also inhibits the activity of the epithelial Na(+) channel (ENaC) SCNN1A, SCNN1B, SCNN1D in a inase-independent mechanism. May also phosphorylate NEDD4L. This Mus musculus (Mouse) protein is Serine/threonine-protein kinase WNK4.